The sequence spans 114 residues: uncharacterized protein (114 aa).

This is an uncharacterized protein from Schizosaccharomyces pombe (strain 972 / ATCC 24843) (Fission yeast).